The sequence spans 963 residues: Importin-13 (963 aa).

HEAT repeat units follow at residues 24–54 (ENVEKALHQLYYDPNIENKNLAQKWLMQAQV), 56–88 (PQAWHFSWQLLQPDKVPEIQYFGASALHIKISR), 95–135 (TDQY…LSMM), 142–179 (AVADMVRLFQAEDSPVDSQGRCLALLELLTVLPEEFQT), 194–231 (LAVECGAVFPLLEQLLQQPSSPSCVRQKVLKCFSSWVQ), 236–268 (LQDCEALIQAAFAALQDSELFDSSVEAIVNAIS), 276–325 (VNTL…ALLD), 330–372 (WQSF…DDIL), 375–438 (EAEK…YEML), 440–476 (AELLSNLYDKLGRLLTSSEEPYSWQHTEALLYGFQSI), 487–522 (VVPGLIGLIPRISISNVQLADTVMFTIGALSEWLAD), 524–558 (PVMINSVLPLVLHALGNPELSVSSVSTLKKICREC), 562–600 (LPPYAANIVAVSQDVLMKQIHKTSQCMWLMQALGFLLSA), 603–648 (VEEN…SNLF), 676–716 (PVVV…VKTL), 720–754 (FAPMVPQLCEMLGRMYSTVPQASALDLTRQLVHIF), 761–803 (FPPI…ALKR), 815–845 (VKAVFQCAVLALKFPEAPTVKASCGFFTELL), 860–893 (EDGRMLLIAVLEAIGGQASRSLMDCFADILFALN), and 897–931 (FSLLSMWIKEALQPPGFPSARLSPEQKDTFSQQIL). In terms of domain architecture, Importin N-terminal spans 45 to 111 (AQKWLMQAQV…KAHSFTQITR (67 aa)).

This sequence belongs to the importin beta family. Interacts with UBC9, RAN, RBM8A, eIF-1A and PAX6. As to expression, expressed in fetal brain, heart, intestine and kidney.

It localises to the cytoplasm. The protein resides in the nucleus. Functionally, functions in nuclear protein import as nuclear transport receptor. Serves as receptor for nuclear localization signals (NLS) in cargo substrates. Is thought to mediate docking of the importin/substrate complex to the nuclear pore complex (NPC) through binding to nucleoporin and the complex is subsequently translocated through the pore by an energy requiring, Ran-dependent mechanism. At the nucleoplasmic side of the NPC, Ran binds to the importin, the importin/substrate complex dissociates and importin is re-exported from the nucleus to the cytoplasm where GTP hydrolysis releases Ran. The directionality of nuclear import is thought to be conferred by an asymmetric distribution of the GTP- and GDP-bound forms of Ran between the cytoplasm and nucleus. Mediates the nuclear import of UBC9, the RBM8A/MAGOH complex, PAX6 and probably other members of the paired homeobox family. Also mediates nuclear export of eIF-1A, and the cytoplasmic release of eIF-1A is triggered by the loading of import substrates onto IPO13. In Rattus norvegicus (Rat), this protein is Importin-13 (Ipo13).